Here is an 837-residue protein sequence, read N- to C-terminus: Espin (837 aa).

9 ANK repeats span residues 1 to 31 (MALEQAMQAARRGDLDVLRSLHAAGLLGPSL), 35 to 66 (LDALPVHHAARSGKLHCLRYLVEEVALPAVSR), 69 to 99 (NGATPAHDAAATGYLSCLQWLLTQGGCRVQE), 103 to 132 (SGATVLHLAARFGHPDVVNWLLYQGGANSA), 137 to 167 (TGALPIHYAAAKGDLPSMKLLVGHYPEGVNA), 171 to 201 (NGATPLYLACQEGHLEVTKYLVQECSADPHL), 205 to 235 (DGMTPLHAAAQMGHNPVLVWLVSFADVSFEQ), 238 to 267 (DGATAMHFAASRGHTKVLSWLLLHGAEISQ), and 270 to 299 (WGGTPLHDAAENGELECCQILAVNGAGLDV). Phosphoserine is present on residues serine 337 and serine 341. Over residues 339–348 (DPSMDLEAKQ) the composition is skewed to basic and acidic residues. Disordered stretches follow at residues 339-459 (DPSM…VGLH), 477-712 (DSLK…PATL), 745-767 (KLQQKMQEEEEQRRKEEEEEARL), and 785-816 (EREQKRKEEERQKLEEIQRAKEQSEKLRTLGY). The span at 351–364 (SGMSSPNTTMSVQP) shows a compositional bias: polar residues. The segment covering 376–395 (LSNYDSCSSSHSSSKGQRST) has biased composition (low complexity). Serine 400 and serine 401 each carry phosphoserine. Residues 423–455 (SLPPPPPPSFPPPPPPGTQLPPPPPGYPAPNPP) are compositionally biased toward pro residues. Phosphoserine occurs at positions 497, 504, and 531. Pro residues predominate over residues 581–604 (LPPPPPPPPLPEALSSPPPAPPLP). Residues 617–626 (SSSSTGSTKS) are compositionally biased toward low complexity. 2 stretches are compositionally biased toward polar residues: residues 627–636 (FNMMSPTGDN) and 651–662 (PTPQSKGLTTVF). Position 631 is a phosphoserine (serine 631). In terms of domain architecture, WH2 spans 635-652 (DNSELLAEIKAGKSLKPT). The span at 663-673 (SGSGQPASQPE) shows a compositional bias: low complexity. Serine 670, serine 674, and serine 680 each carry phosphoserine. The stretch at 738–814 (KRQVMVRKLQ…KEQSEKLRTL (77 aa)) forms a coiled coil.

In terms of assembly, monomer. Interacts with PFN2. Binds F-actin in a Ca(2+)-resistant fashion. Interacts (via N-terminal) with BAIAP2 (via SH3-domain). Interacts with MYO3A (via C-terminus). Interacts with MYO3B (via C-terminus). In terms of tissue distribution, expressed at high concentration in the microvillar parallel actin bundle (PAB) of hair cells stereocilia in the cochlea and vestibular system. Detected also at high levels of a number of other sensory cell types, including taste receptor cells, solitary chemoreceptor cells, vomeronasal sensory neurons and Merkel cells. Isoform 1 is detected in testis. Isoforms 2 is detected in small intestine and kidney (at protein level). Isoforms 3, 4, 6 and 8 are expressed in Purkinje cells dendritic spines.

It is found in the cytoplasm. It localises to the cytoskeleton. The protein resides in the cell projection. Its subcellular location is the stereocilium. The protein localises to the microvillus. It is found in the cell junction. It localises to the dendritic spine. Multifunctional actin-bundling protein. Plays a major role in regulating the organization, dimension, dynamics and signaling capacities of the actin filament-rich microvilli in the mechanosensory and chemosensory cells. Required for the assembly and stabilization of the stereociliary parallel actin bundles. Plays a crucial role in the formation and maintenance of inner ear hair cell stereocilia. Involved in the elongation of actin in stereocilia. In extrastriolar hair cells, required for targeting MYO3B to stereocilia tips, and for regulation of stereocilia diameter and staircase formation. The protein is Espin (Espn) of Rattus norvegicus (Rat).